The sequence spans 358 residues: Homoserine O-succinyltransferase (358 aa).

The Acyl-thioester intermediate role is filled by Cys-146. Residues Lys-167 and Ser-196 each coordinate substrate. The active-site Proton acceptor is the His-239. Glu-241 is a catalytic residue. A substrate-binding site is contributed by Arg-253.

This sequence belongs to the MetA family.

The protein localises to the cytoplasm. The catalysed reaction is L-homoserine + succinyl-CoA = O-succinyl-L-homoserine + CoA. It functions in the pathway amino-acid biosynthesis; L-methionine biosynthesis via de novo pathway; O-succinyl-L-homoserine from L-homoserine: step 1/1. Its function is as follows. Transfers a succinyl group from succinyl-CoA to L-homoserine, forming succinyl-L-homoserine. The chain is Homoserine O-succinyltransferase from Nitrosococcus oceani (strain ATCC 19707 / BCRC 17464 / JCM 30415 / NCIMB 11848 / C-107).